The following is a 199-amino-acid chain: Superoxide dismutase [Mn/Fe] (199 aa).

Residues H27, H81, D161, and H165 each coordinate Fe(3+). Mn(2+) contacts are provided by H27, H81, D161, and H165.

It belongs to the iron/manganese superoxide dismutase family. Homodimer. Mn(2+) serves as cofactor. The cofactor is Fe(3+).

It catalyses the reaction 2 superoxide + 2 H(+) = H2O2 + O2. In terms of biological role, destroys superoxide anion radicals which are normally produced within the cells and which are toxic to biological systems. Catalyzes the dismutation of superoxide anion radicals into O2 and H2O2 by successive reduction and oxidation of the transition metal ion at the active site. In Staphylococcus saprophyticus subsp. saprophyticus (strain ATCC 15305 / DSM 20229 / NCIMB 8711 / NCTC 7292 / S-41), this protein is Superoxide dismutase [Mn/Fe] (sodA).